The sequence spans 186 residues: Large ribosomal subunit protein uL22 (186 aa).

The segment at 159 to 186 (KATDEEPTKKKLSKKKLQRQKEKMMRSE) is disordered. The span at 177–186 (RQKEKMMRSE) shows a compositional bias: basic and acidic residues.

Belongs to the universal ribosomal protein uL22 family.

This Phlebotomus papatasi (Sandfly) protein is Large ribosomal subunit protein uL22 (RpL17).